The following is a 652-amino-acid chain: MIKLKLPDGSVREHEVPLDGLAFAESIAKSLAKKAVAIKIDGQMKDLSTVIDRDAEVEIVTRETPDGVDLLRHDASHVMAEAVQELFPGTQVTIGPVIENGFYYDFARAEPFKAEDLEKIEQRMREIVDRDETITREVWDRDAAVEYFKKIGEIYKAEIIASIPAGEQVSVYRQGNWLDLCRGPHLPSTGKLGKAFKLTKLAGAYWRGDSRNEMLQRIYGTCWANENDLKAYLTMVEEAERRDHRKIGREMDLFHLQEEAQGSVFWHPKGWRIWQALEQYVRRRIDAAGYVEVRTPQLLDSKFWEQSGHWGKYRENMFVVPDEVPSTDEDAPVLSGKAKLMAIKPMNCPAHIQIFKQGVKSYRDLPLRMAEFGCCHRNEPHGALHGLMRVRQMTQDDAHIFCTEDQIKEETEAFVALLESVYEDMGFTGTKLRLATRPDVRAGTDETWDKAEKALEEALKALGKEFDFAPGEGAFYGPKLEFHLRDAIGRSWQLGTLQLDFVLPERLDASYIGEDGNKHRPVMLHRAILGSLERFIGILIENYEGRFPMWLAPVQAVVTTITSDADPYAEEMLQKLRDAGIRAELDLRNEKINYKVREHSVAKVPAIFVAGKREAEEGTVSIRRLGSQQQQTMKLDEAIKALAEEATPPDMR.

Residues 1-61 (MIKLKLPDGS…DRDAEVEIVT (61 aa)) form the TGS domain. The interval 243–548 (DHRKIGREMD…LIENYEGRFP (306 aa)) is catalytic. The Zn(2+) site is built by Cys-348, His-399, and His-525.

The protein belongs to the class-II aminoacyl-tRNA synthetase family. In terms of assembly, homodimer. Zn(2+) serves as cofactor.

It is found in the cytoplasm. It carries out the reaction tRNA(Thr) + L-threonine + ATP = L-threonyl-tRNA(Thr) + AMP + diphosphate + H(+). Catalyzes the attachment of threonine to tRNA(Thr) in a two-step reaction: L-threonine is first activated by ATP to form Thr-AMP and then transferred to the acceptor end of tRNA(Thr). Also edits incorrectly charged L-seryl-tRNA(Thr). The chain is Threonine--tRNA ligase from Parvibaculum lavamentivorans (strain DS-1 / DSM 13023 / NCIMB 13966).